Here is a 223-residue protein sequence, read N- to C-terminus: Nicotinamide/nicotinic acid mononucleotide adenylyltransferase 2 (223 aa).

Residues Ser-11 and Phe-12 each contribute to the NAD(+) site. ATP is bound at residue His-19. NAD(+) is bound by residues Trp-87, Thr-90, Gly-116, Asp-118, Leu-133, Trp-134, and Arg-153. An ATP-binding site is contributed by 190–191 (TR).

The protein belongs to the eukaryotic NMN adenylyltransferase family. Requires a divalent metal cation as cofactor.

The catalysed reaction is beta-nicotinamide D-ribonucleotide + ATP + H(+) = diphosphate + NAD(+). The enzyme catalyses nicotinate beta-D-ribonucleotide + ATP + H(+) = deamido-NAD(+) + diphosphate. Its pathway is cofactor biosynthesis; NAD(+) biosynthesis; deamido-NAD(+) from nicotinate D-ribonucleotide: step 1/1. The protein operates within cofactor biosynthesis; NAD(+) biosynthesis; NAD(+) from nicotinamide D-ribonucleotide: step 1/1. Functionally, catalyzes the formation of NAD(+) from nicotinamide mononucleotide (NMN) and ATP. Can also use the deamidated form; nicotinic acid mononucleotide (NaMN) as substrate. This chain is Nicotinamide/nicotinic acid mononucleotide adenylyltransferase 2, found in Caenorhabditis elegans.